The chain runs to 435 residues: GTPase Der (435 aa).

EngA-type G domains lie at 3 to 168 (PLVA…PDET) and 176 to 351 (IKLA…QNRQ). GTP is bound by residues 9 to 16 (GRPNVGKS), 56 to 60 (DTGGY), 120 to 123 (NKVE), 182 to 189 (GRPNVGKS), 229 to 233 (DTAGL), and 294 to 297 (NKWD). A KH-like domain is found at 352–435 (KKISTSELNR…VPVSFRYRKK (84 aa)).

The protein belongs to the TRAFAC class TrmE-Era-EngA-EngB-Septin-like GTPase superfamily. EngA (Der) GTPase family. Associates with the 50S ribosomal subunit.

Functionally, GTPase that plays an essential role in the late steps of ribosome biogenesis. This is GTPase Der from Chlorobium phaeobacteroides (strain BS1).